The following is a 152-amino-acid chain: MSDSFLPTCILCLLALSSACYIQNCPRGGKRSQPDTSRECVSCGPGNAGRCYGPSICCGAALGCLVGSPETMSCMEENHLPSPCETGGRPCGDEGRCAAPGVCCDSVSCVMDSECLEDVRSDQSEDPSRLKTVSGEILLRLLNLASRGRRDF.

The first 19 residues, 1 to 19 (MSDSFLPTCILCLLALSSA), serve as a signal peptide directing secretion. The cysteines at positions 20 and 25 are disulfide-linked. Position 28 is a glycine amide (Gly-28). Intrachain disulfides connect Cys-40/Cys-84, Cys-43/Cys-57, Cys-51/Cys-74, Cys-58/Cys-64, Cys-91/Cys-103, Cys-97/Cys-115, and Cys-104/Cys-109.

It belongs to the vasopressin/oxytocin family.

It is found in the secreted. Its function is as follows. Vasotocin is an antidiuretic hormone. The polypeptide is Vasotocin-neurophysin VT 1 (Catostomus commersonii (White sucker)).